The sequence spans 505 residues: Alpha-1-syntrophin (505 aa).

Disordered stretches follow at residues 1–24 and 40–75; these read MASG…AGAG and LTVS…AAPP. 2 consecutive PH domains span residues 6-269 and 293-401; these read RAPR…AQIN and DIKQ…DGCH. Residues 9 to 18 are compositionally biased toward low complexity; it reads RTGLLELRAG. The PDZ domain maps to 87 to 170; the sequence is RVTVRKADAG…EVVLEVKYMK (84 aa). A phosphoserine mark is found at Ser-101, Ser-184, Ser-189, Ser-193, and Ser-200. Residues 183 to 212 are disordered; it reads TSVGWDSPPASPLQRQPSSPGPQTRNLSEA. The span at 195 to 209 shows a compositional bias: polar residues; it reads LQRQPSSPGPQTRNL. Residues 449 to 505 form the SU domain; the sequence is PFEKLQMSSDDGASLLFLDFGGAEGEIQLDLHSCPKTMVFIIHSFLSAKVTRLGLLA. Residues 483–505 form a calmodulin-binding region; the sequence is PKTMVFIIHSFLSAKVTRLGLLA.

This sequence belongs to the syntrophin family. As to quaternary structure, monomer and homodimer. Interacts with the dystrophin related protein DTNA; SGCG of the dystrophin glycoprotein complex; NOS1; GRB2; GA; TGFA; MAPK12 and the sodium channel proteins SCN4A and SCN5A. Interacts with the dystrophin protein DMD in a calmodulin dependent manner and with related protein UTRN; SGCA of the dystrophin glycoprotein complex; F-actin; calmodulin and with the other members of the syntrophin family SNTB1 and SNTB2. Interacts with MYOC; regulates muscle hypertrophy. Interacts with DTNB. In terms of processing, phosphorylated by CaM-kinase II. Phosphorylation may inhibit the interaction with DMD. As to expression, highly expressed in skeletal and cardiac muscle and is also detected in brain.

The protein localises to the cell membrane. Its subcellular location is the sarcolemma. The protein resides in the cell junction. It localises to the cytoplasm. It is found in the cytoskeleton. Functionally, adapter protein that binds to and probably organizes the subcellular localization of a variety of membrane proteins. May link various receptors to the actin cytoskeleton and the extracellular matrix via dystrophin glycoprotein complex. Plays an important role in synapse formation and in the organization of UTRN and acetylcholine receptors at the neuromuscular synapse. Binds to phosphatidylinositol 4,5-bisphosphate. This chain is Alpha-1-syntrophin (SNTA1), found in Oryctolagus cuniculus (Rabbit).